We begin with the raw amino-acid sequence, 116 residues long: Ig heavy chain V region 1B43 (116 aa).

The first 18 residues, 1-18 (MRVLILLCLFTAFPGILS), serve as a signal peptide directing secretion. The segment at 19 to 48 (DVQLQESGPDLVKPSQSLSLTCTVTGYSIT) is framework-1. A disulfide bridge links Cys40 with Cys114. The interval 49 to 53 (SGYSW) is complementarity-determining-1. A framework-2 region spans residues 54–67 (HWIRQFPGNKLEWM). The complementarity-determining-2 stretch occupies residues 68 to 84 (GYIHYSGNTSYNPSLKS). The segment at 85–116 (RISITRDTSKNQFFLQLNSVTTEDTATYYCAR) is framework-3.

This Mus musculus (Mouse) protein is Ig heavy chain V region 1B43.